The sequence spans 1865 residues: MAGLQLVTPASSPMGPFFGLPWQQEAIHDNIYTPRKYQVELLEAALEHNTIVCLNTGSGKTFIAVLLIKELSHQIRGENGKRTVFLVNAASSVAQQASTVRTHSDLQVGDYMSEDMTSWPEEMWNREMIENQVLVMTCHIFLHVLKNGVLPLSKINLLVFDECHLAITGHPYREIMKICEGCPSCPRILGLTASILNGKCDPCDLEEKIQNLEKILQSNAETATDLVVLDRYASQPREEVLDCGQYQDQSGLSERLLNELDEALNFLNDCNLSVHREDRDPTFISKQVLNDCRAVLTVLGPWCADKAAGIMVRELQKYIKHEQEELNRKFLLFTDTILRKIHALCEEHFSPASLDLKFVTPKVIRLLEILHEYKPFERQQFESVEWYNNRNQDNYVSWSDSEDDDEDEEAEAKEKTEANFPSPFTNILCGIIFVERRYTAVVLNRLIKEAGKQDPELAYISSNFITGHSIGKNQPRNKQMEVEFRKQEEVLRKFRAHETNLLIATSIVEEGVDIPKCNLVVRFDLPTEYRSYVQSKGRARAPVSNYIMLADSERTKTFQEDLKTYKAIEKILRNKCSKSAECNDFELEPVTDDDNVLPPYVLRSEDGGPRVTMNTAIGHVNRYCARLPSDPFTHLAPKCKTVEMNTGGYRSTLFLPINSPLRVPVTGPVMNCARLAEKAVALLCCEKLHKIGELDDHLMPVGKETVKYEEELDLHDEEETSVPGRPGSTKRRQCSPKAIPECLRGCYPVPEQPCYLYVIGMVLTTPLPDELNFRRRKLYPPEDTTRCFGILTAKPIPRIPHFPVYTRSGEVTISIELQKSGFSLSAEQLELITRLHQYIFSHILRLEKPALEFKPVEADSAYCVLPLNIVEDSNTLDLDFKFMEDIEKSEARIGIPNTQYTKQNPFIFKLEDYQDAVIIPRYRNFDQPHRFYVADVYTDLTPLSKFPSPEYETFAEYYKTKYNLDLSNVNQPLLDVDHTSSRLNLLTPRHLNQKGKALPLSSAEKRKAKWESLQNKQILVPELCAIHPIPASLWRKAVCLPSILYRLHCLLTAEELRSQTAIDAGVGAQTLPPDFRYPNLDFGWKKSIDSKSFISCPSACMEEDDDHCKLGTSSDSNHTAPESCSMEVSQPPEGAPNTPDEKLETLTLPVTDLNKDCFPNLPNGTQADSDDLPHRSDVCQCSQLGPLERDLSTQTTTSVSVRPSPAGEPQPWPSDECTGRSSDLCDPHVKKPTSKHCPKSETATSTPAPSETSSEDCRSACAGPAWDSPKTLGPNPGLILQALTLSNASDGFNLERLEMLGDSFLKHAITTYLFCTYPDAHEGRLSYMRSKKVSNCNLYRLGKKKGLPSRMVVSIFDPPVNWLPPGYVVNQDKSSTDKWDSDENKDLANGKASDDEDEDDDDEPEEAEVEPSKEDVNVEDDLEYYYEHIRFIDSMLIGSGAFGKKISLQPTDPGYEWKAPKKAHNSHFSPDGGADEFDYSSWDAMCYLDPSKAGEEDDFVVGFWNPSEENCGTDIGKQSISYDLHTEQCIADKSIADCVEALLGCYLTSCGERAAQLFLCSLGLKVLPPEKQSSGGSAELQYGWLKIPPRCMFEHPDAERTLNHLISGFLNFESKINYTFKNKAYLLQAFTHASYHYNTITDCYQRLEFLGDAILDYLITKHLYEDPRQHSPGVLTDLRSALVNNTIFASLAVKYDYHKYFKAVSPELFHVIDDFVQFQLEKNEMQGMDSELRRSEEDEEKEEDIEVPKAMGDIFESLAGAIYMDSGMSLETVWQVYYPMMRPLIEKFSANVPRSPVRELLEMEPETAKFSPAERTYDGKVRVTVEVVGKGKFKGVGRSYRIAKSAAARRALRSLKANQPQVQNN.

In terms of domain architecture, Helicase ATP-binding spans L41 to E213. Position 54 to 61 (L54 to T61) interacts with ATP. The DECH box motif lies at D161–H164. Residues S397–E417 are disordered. The span at D400–E411 shows a compositional bias: acidic residues. The region spanning N419–E588 is the Helicase C-terminal domain. The 93-residue stretch at A616–Y708 folds into the Dicer dsRNA-binding fold domain. The tract at residues D713–R732 is disordered. The PAZ domain occupies K881 to P1028. 2 stretches are compositionally biased toward polar residues: residues G1111 to V1128 and S1192 to V1201. Disordered regions lie at residues G1111–K1142 and D1190–S1259. Positions S1240–T1252 are enriched in low complexity. Positions A1262–K1385 constitute an RNase III 1 domain. Positions 1298, 1377, and 1380 each coordinate Mg(2+). The disordered stretch occupies residues K1373–N1417. Residues S1374 to A1388 are compositionally biased toward basic and acidic residues. The span at D1394–V1409 shows a compositional bias: acidic residues. One can recognise an RNase III 2 domain in the interval F1609 to G1767. Residues E1648, D1753, and E1756 each contribute to the Mg(2+) site. A DRBM domain is found at V1792–A1857.

Belongs to the helicase family. Dicer subfamily. As to quaternary structure, component of the RISC loading complex (RLC), or micro-RNA (miRNA) loading complex (miRLC), which is composed of dicer1, ago2 and tarbp2; dicer1 and tarbp2 are required to process precursor miRNAs (pre-miRNAs) to mature miRNAs and then load them onto ago2. Note that the trimeric RLC/miRLC is also referred to as RISC. Requires Mg(2+) as cofactor. Mn(2+) serves as cofactor.

The protein localises to the cytoplasm. It carries out the reaction Endonucleolytic cleavage to 5'-phosphomonoester.. Functionally, double-stranded RNA (dsRNA) endoribonuclease playing a central role in short dsRNA-mediated post-transcriptional gene silencing. Cleaves naturally occurring long dsRNAs and short hairpin pre-microRNAs (miRNA) into fragments of twenty-one to twenty-three nucleotides with 3' overhang of two nucleotides, producing respectively short interfering RNAs (siRNA) and mature microRNAs. SiRNAs and miRNAs serve as guide to direct the RNA-induced silencing complex (RISC) to complementary RNAs to degrade them or prevent their translation. Gene silencing mediated by siRNAs, also called RNA interference, controls the elimination of transcripts from mobile and repetitive DNA elements of the genome but also the degradation of exogenous RNA of viral origin for instance. The miRNA pathway on the other side is a mean to specifically regulate the expression of target genes. The chain is Endoribonuclease Dicer (dicer1) from Danio rerio (Zebrafish).